The following is a 253-amino-acid chain: Giant extracellular hemoglobin linker 1 chain (253 aa).

An LDL-receptor class A domain is found at 89–131 (HHCDDDHLSCKDVAFTCIGHNLVCDGHKDCLNGHDEDEETCSI). Intrachain disulfides connect Cys-91-Cys-105, Cys-98-Cys-118, and Cys-112-Cys-129.

Disulfide-linked dimer of identical chains. A model is proposed for the subunit structure of the Tylorrhynchus hemoglobin, consisting of 216 polypeptide chains, 192 heme-containing chains, and 24 linker chains.

Its function is as follows. Acts as a linker for the assembly of heme-containing chains in the construction of giant hemoglobin. The chain is Giant extracellular hemoglobin linker 1 chain from Tylorrhynchus heterochetus (Japanese palolo worm).